A 142-amino-acid polypeptide reads, in one-letter code: Large ribosomal subunit protein uL13 (142 aa).

Belongs to the universal ribosomal protein uL13 family. Part of the 50S ribosomal subunit.

This protein is one of the early assembly proteins of the 50S ribosomal subunit, although it is not seen to bind rRNA by itself. It is important during the early stages of 50S assembly. This chain is Large ribosomal subunit protein uL13, found in Glaesserella parasuis serovar 5 (strain SH0165) (Haemophilus parasuis).